We begin with the raw amino-acid sequence, 158 residues long: Cyclic pyranopterin monophosphate synthase (158 aa).

Substrate contacts are provided by residues 76–78 (LCH) and 114–115 (ME). Aspartate 129 is a catalytic residue.

Belongs to the MoaC family. Homohexamer; trimer of dimers.

The enzyme catalyses (8S)-3',8-cyclo-7,8-dihydroguanosine 5'-triphosphate = cyclic pyranopterin phosphate + diphosphate. The protein operates within cofactor biosynthesis; molybdopterin biosynthesis. In terms of biological role, catalyzes the conversion of (8S)-3',8-cyclo-7,8-dihydroguanosine 5'-triphosphate to cyclic pyranopterin monophosphate (cPMP). The protein is Cyclic pyranopterin monophosphate synthase of Shewanella loihica (strain ATCC BAA-1088 / PV-4).